A 369-amino-acid polypeptide reads, in one-letter code: MEGSLEREAPAGALAAVLKHSSTLPPESTQVRGYDFNRGVNYRALLEAFGTTGFQATNFGRAVQQVNAMIEKKLEPLSQDEDQHADLTQSRRPLTSCTIFLGYTSNLISSGIRETIRYLVQHNMVDVLVTTAGGVEEDLIKCLAPTYLGEFSLRGKELRENGINRIGNLLVPNENYCKFEDWLMPILDQMVMEQNTEGVKWTPSKMIARLGKEINNPESVYYWAQKNHIPVFSPALTDGSLGDMIFFHSYKNPGLVLDIVEDLRLINTQAIFAKCTGMIILGGGVVKHHIANANLMRNGADYAVYINTAQEFDGSDSGARPDEAVSWGKIRVDAQPVKVYADASLVFPLLVAETFAQKMDAFMHEKNED.

Phosphoserine is present on serine 78. Residues 105 to 109 (SNLIS), 131 to 133 (TAG), glutamate 137, and aspartate 238 contribute to the NAD(+) site. 136-137 (EE) contacts spermidine. Aspartate 243 serves as a coordination point for spermidine. Position 283 (glycine 283) interacts with NAD(+). Spermidine is bound at residue histidine 288. 308 to 309 (TA) contacts NAD(+). Residues 314-316 (GSD) and 323-329 (EAVSWGK) each bind spermidine. Lysine 329 serves as the catalytic Nucleophile. Position 342 to 343 (342 to 343 (DA)) interacts with NAD(+).

It belongs to the deoxyhypusine synthase family. As to quaternary structure, homotetramer formed by a dimer of dimers. It depends on NAD(+) as a cofactor.

The enzyme catalyses [eIF5A protein]-L-lysine + spermidine = [eIF5A protein]-deoxyhypusine + propane-1,3-diamine. It participates in protein modification; eIF5A hypusination. Catalyzes the NAD-dependent oxidative cleavage of spermidine and the subsequent transfer of the butylamine moiety of spermidine to the epsilon-amino group of a critical lysine residue of the eIF-5A precursor protein to form the intermediate deoxyhypusine residue. This is the first step of the post-translational modification of that lysine into an unusual amino acid residue named hypusine. Hypusination is unique to mature eIF-5A factor and is essential for its function. This chain is Deoxyhypusine synthase (DHPS), found in Homo sapiens (Human).